Consider the following 91-residue polypeptide: Small ribosomal subunit protein uS19 (91 aa).

The protein belongs to the universal ribosomal protein uS19 family.

In terms of biological role, protein S19 forms a complex with S13 that binds strongly to the 16S ribosomal RNA. This chain is Small ribosomal subunit protein uS19, found in Trichodesmium erythraeum (strain IMS101).